The sequence spans 109 residues: Large ribosomal subunit protein eL30 (109 aa).

Belongs to the eukaryotic ribosomal protein eL30 family. Component of the large ribosomal subunit (LSU). Mature N.crassa ribosomes consist of a small (40S) and a large (60S) subunit. The 40S small subunit contains 1 molecule of ribosomal RNA (18S rRNA) and at least 32 different proteins. The large 60S subunit contains 3 rRNA molecules (26S, 5.8S and 5S rRNA) and at least 42 different proteins.

It localises to the cytoplasm. Functionally, component of the ribosome, a large ribonucleoprotein complex responsible for the synthesis of proteins in the cell. The small ribosomal subunit (SSU) binds messenger RNAs (mRNAs) and translates the encoded message by selecting cognate aminoacyl-transfer RNA (tRNA) molecules. The large subunit (LSU) contains the ribosomal catalytic site termed the peptidyl transferase center (PTC), which catalyzes the formation of peptide bonds, thereby polymerizing the amino acids delivered by tRNAs into a polypeptide chain. The nascent polypeptides leave the ribosome through a tunnel in the LSU and interact with protein factors that function in enzymatic processing, targeting, and the membrane insertion of nascent chains at the exit of the ribosomal tunnel. The chain is Large ribosomal subunit protein eL30 (rpl-30) from Neurospora crassa (strain ATCC 24698 / 74-OR23-1A / CBS 708.71 / DSM 1257 / FGSC 987).